The sequence spans 877 residues: (E,E)-geranyllinalool synthase (877 aa).

Residues Asp540 and Asp544 each contribute to the Mg(2+) site. Residues Asp540, Asp544, Arg677, and Asn680 each coordinate substrate. The DDXXD motif signature appears at 540-544 (DDFFD). Residues Asn680, Ser684, and Glu688 each coordinate Mg(2+).

This sequence belongs to the terpene synthase family. Tpsf subfamily. Mg(2+) serves as cofactor. Requires Mn(2+) as cofactor. In terms of tissue distribution, expressed in leaves and flowers.

It localises to the cytoplasm. The catalysed reaction is (2E,6E,10E)-geranylgeranyl diphosphate + H2O = (6E,10E)-geranyllinalool + diphosphate. Its pathway is secondary metabolite biosynthesis; terpenoid biosynthesis. In terms of biological role, involved in the biosynthesis of homoterpenes, attractants of herbivores parasitoids and predators (e.g. predatory mites and parasitoid wasps). Involved in diterpene (C20) biosynthesis. Catalyzes the conversion of geranylgeranyl diphosphate to (E,E)-geranyllinalool, the precursor of the insect-induced volatile C16-homoterpene TMTT. The chain is (E,E)-geranyllinalool synthase from Arabidopsis thaliana (Mouse-ear cress).